Reading from the N-terminus, the 151-residue chain is Ribosome maturation factor RimP (151 aa).

This sequence belongs to the RimP family.

It localises to the cytoplasm. Functionally, required for maturation of 30S ribosomal subunits. The protein is Ribosome maturation factor RimP of Shewanella halifaxensis (strain HAW-EB4).